Reading from the N-terminus, the 356-residue chain is Tungsten-containing aldehyde ferredoxin oxidoreductase cofactor-modifying protein (356 aa).

The Radical SAM core domain occupies 1–214 (MKYLYLEITS…PIVNELYKIA (214 aa)). [4Fe-4S] cluster contacts are provided by Cys-12, Cys-16, and Cys-19.

It belongs to the radical SAM superfamily. [4Fe-4S] cluster serves as cofactor.

Involved in the biosynthesis of a molybdopterin-based tungsten cofactor. The protein is Tungsten-containing aldehyde ferredoxin oxidoreductase cofactor-modifying protein (cmo) of Pyrococcus furiosus (strain ATCC 43587 / DSM 3638 / JCM 8422 / Vc1).